A 275-amino-acid polypeptide reads, in one-letter code: Phosphonoacetaldehyde hydrolase (275 aa).

The Nucleophile role is filled by Asp15. Residues Asp15 and Ala17 each contribute to the Mg(2+) site. Lys56 (schiff-base intermediate with substrate) is an active-site residue. Asp189 contacts Mg(2+).

This sequence belongs to the HAD-like hydrolase superfamily. PhnX family. In terms of assembly, homodimer. Requires Mg(2+) as cofactor.

It carries out the reaction phosphonoacetaldehyde + H2O = acetaldehyde + phosphate + H(+). Inhibited by phosphite, moderately inhibited by phosphonic acids, the corresponding aminophosphonic acids activate the enzyme. Functionally, involved in phosphonate degradation. This chain is Phosphonoacetaldehyde hydrolase, found in Pseudomonas aeruginosa (strain ATCC 15692 / DSM 22644 / CIP 104116 / JCM 14847 / LMG 12228 / 1C / PRS 101 / PAO1).